Reading from the N-terminus, the 81-residue chain is ATP synthase subunit c, chloroplastic (81 aa).

A run of 2 helical transmembrane segments spans residues 3–23 and 53–73; these read PLISAASVIAAGLAVGLASIG and LLLSLAFMEALTIYGLVVALA.

This sequence belongs to the ATPase C chain family. F-type ATPases have 2 components, F(1) - the catalytic core - and F(0) - the membrane proton channel. F(1) has five subunits: alpha(3), beta(3), gamma(1), delta(1), epsilon(1). F(0) has four main subunits: a(1), b(1), b'(1) and c(10-14). The alpha and beta chains form an alternating ring which encloses part of the gamma chain. F(1) is attached to F(0) by a central stalk formed by the gamma and epsilon chains, while a peripheral stalk is formed by the delta, b and b' chains.

Its subcellular location is the plastid. It is found in the chloroplast thylakoid membrane. In terms of biological role, f(1)F(0) ATP synthase produces ATP from ADP in the presence of a proton or sodium gradient. F-type ATPases consist of two structural domains, F(1) containing the extramembraneous catalytic core and F(0) containing the membrane proton channel, linked together by a central stalk and a peripheral stalk. During catalysis, ATP synthesis in the catalytic domain of F(1) is coupled via a rotary mechanism of the central stalk subunits to proton translocation. Key component of the F(0) channel; it plays a direct role in translocation across the membrane. A homomeric c-ring of between 10-14 subunits forms the central stalk rotor element with the F(1) delta and epsilon subunits. In Huperzia lucidula (Shining clubmoss), this protein is ATP synthase subunit c, chloroplastic.